Here is a 1035-residue protein sequence, read N- to C-terminus: Calcium-transporting ATPase 7, plasma membrane-type (1035 aa).

The Cytoplasmic portion of the chain corresponds to 1 to 166 (MECADYFIGS…KGFFRHVWDA (166 aa)). The chain crosses the membrane as a helical span at residues 167–187 (LADVFLIVLLVCAAVSLAFGI). Over 188-194 (KEHGIKD) the chain is Extracellular. A helical membrane pass occupies residues 195–215 (GWYDGVSIFLAVFLVAAVSAV). At 216–348 (SNHSQGKRFD…DPTPLQERLE (133 aa)) the chain is on the cytoplasmic side. A helical transmembrane segment spans residues 349–369 (GLTSSIGKVGIAVAVLVFAVL). Over 370-395 (TARHFTGSTRDEQGNALFDKRNVTFN) the chain is Extracellular. Residue Asn-391 is glycosylated (N-linked (GlcNAc...) asparagine). The chain crosses the membrane as a helical span at residues 396 to 416 (AVFSGLVGIFQQAVTIIVVAI). Residues 417 to 818 (PEGLPLAVTL…GRCVYNNIQK (402 aa)) lie on the Cytoplasmic side of the membrane. Residue Asp-460 is the 4-aspartylphosphate intermediate of the active site. Mg(2+) is bound by residues Asp-761 and Asp-765. A helical membrane pass occupies residues 819–839 (FIQFQLTVNVAALVINFVSAV). Residues 840-845 (TTGRMP) are Extracellular-facing. The chain crosses the membrane as a helical span at residues 846-866 (LTTVQLLWVNLIMDTMGALAL). The Cytoplasmic segment spans residues 867–887 (ATDTPTAGLMRRPPIGRAAPL). A helical membrane pass occupies residues 888 to 910 (ISNAMWRNLAAQAAYQVAVLLAL). The Extracellular portion of the chain corresponds to 911-919 (QYRGFGGAG). A helical transmembrane segment spans residues 920–940 (AGERANGTMIFNAFVLCQVFN). Residues 941–960 (EFNAREIERRNVFAGVHRNR) lie on the Cytoplasmic side of the membrane. The helical transmembrane segment at 961-981 (MFLGIVAVTVALQVVMVELLT) threads the bilayer. The Extracellular portion of the chain corresponds to 982–990 (KFAGTERLG). Residues 991–1011 (WGQWGACVGIAAVSWPIGWAV) form a helical membrane-spanning segment. Residues 1012–1035 (KCIPVPERPFHEIITARRRRRRST) are Cytoplasmic-facing.

Belongs to the cation transport ATPase (P-type) (TC 3.A.3) family. Type IIB subfamily.

Its subcellular location is the golgi apparatus membrane. It carries out the reaction Ca(2+)(in) + ATP + H2O = Ca(2+)(out) + ADP + phosphate + H(+). Its activity is regulated as follows. Activated by calmodulin. This magnesium-dependent enzyme catalyzes the hydrolysis of ATP coupled with the translocation of calcium from the cytosol out of the cell, into the endoplasmic reticulum, or into organelles. Involved in salt stress tolerance. This is Calcium-transporting ATPase 7, plasma membrane-type from Oryza sativa subsp. japonica (Rice).